A 463-amino-acid chain; its full sequence is Dopaminechrome tautomerase (463 aa).

This sequence belongs to the major royal jelly protein family.

The protein localises to the secreted. The catalysed reaction is dopaminechrome = 5,6-dihydroxyindole. It functions in the pathway pigment biosynthesis; melanin biosynthesis. Catalyzes the conversion of dopaminechrome to 5,6-dihydroxyindole in the eumelanin biosynthetic pathway originating from dopamine. Catalyzes tautomerization of dopaminechrome to 5,6-dihydroxyindole during eumelanin biosynthesis. Acts both dopaminechrome and N-methyl dopaminechrome but not on dopachrome or other aminochromes tested. This is Dopaminechrome tautomerase from Drosophila melanogaster (Fruit fly).